We begin with the raw amino-acid sequence, 124 residues long: Keratin-associated protein 12-2 (124 aa).

20 repeat units span residues 10–13 (CQAA), 14–18 (CVPSS), 19–23 (CQPSC), 24–28 (STSSP), 33–38 (CFTSSL), 39–43 (CQPTC), 44–48 (STSST), 49–52 (CQAT), 53–57 (CVPVS), 58–62 (YRPAV), 63–67 (CLPVT), 68–72 (YKPTL), 73–77 (CVTPS), 78–82 (CQSSV), 83–87 (FLPVS), 88–92 (YRPAV), 98–102 (CQSSG), 103–107 (CYQPS), 108–112 (CPTLV), and 113–117 (YRPIS). Positions 10-117 (CQAACVPSSC…CPTLVYRPIS (108 aa)) are 20 X 5 AA approximate repeats.

This sequence belongs to the KRTAP type 12 family. As to quaternary structure, interacts with hair keratins.

In terms of biological role, in the hair cortex, hair keratin intermediate filaments are embedded in an interfilamentous matrix, consisting of hair keratin-associated proteins (KRTAP), which are essential for the formation of a rigid and resistant hair shaft through their extensive disulfide bond cross-linking with abundant cysteine residues of hair keratins. The matrix proteins include the high-sulfur and high-glycine-tyrosine keratins. In Bos taurus (Bovine), this protein is Keratin-associated protein 12-2.